A 1017-amino-acid polypeptide reads, in one-letter code: Putative calcium-transporting ATPase 13, plasma membrane-type (1017 aa).

At Met1 the chain carries N-acetylmethionine. The Cytoplasmic segment spans residues 1-147; that stretch reads MRRNVSDHAE…NTYTRQPSKG (147 aa). Residues 20–31 form an interaction with calmodulin region; the sequence is LLELPKTLSKSN. The helical transmembrane segment at 148 to 168 threads the bilayer; sequence LFHFVVEAFKDLTILILLGCA. At 169–186 the chain is on the lumenal side; that stretch reads TLSLGFGIKEHGLKEGWY. The chain crosses the membrane as a helical span at residues 187–207; it reads DGGSIFVAVFLVVAVSAVSNF. Residues 208–336 lie on the Cytoplasmic side of the membrane; sequence RQNRQFDKLS…NEQTPLQSRL (129 aa). The chain crosses the membrane as a helical span at residues 337-356; the sequence is DKLTSSIGKVGLLVAFLVLL. The Lumenal segment spans residues 357–393; it reads VLLIRYFTGTTKDESGNREYNGKTTKSDEIVNAVVKM. The helical transmembrane segment at 394-411 threads the bilayer; that stretch reads VAAAVTIIVVAIPEGLPL. Over 412-802 the chain is Cytoplasmic; it reads AVTLTLAYSM…KWGRCVYNNI (391 aa). Asp449 acts as the 4-aspartylphosphate intermediate in catalysis. The Mg(2+) site is built by Asp747 and Asp751. A helical membrane pass occupies residues 803 to 821; the sequence is QKFIQFQLTVNVAALVINF. Residues 822 to 832 lie on the Lumenal side of the membrane; sequence VAAVSAGDVPL. Residues 833-853 traverse the membrane as a helical segment; sequence TAVQLLWVNLIMDTLGALALA. Over 854–873 the chain is Cytoplasmic; the sequence is TEKPTNDLMKKKPIGRVAPL. A helical transmembrane segment spans residues 874–896; that stretch reads ITNIMWRNLLAQAFYQISVLLVL. Residues 897-905 lie on the Lumenal side of the membrane; sequence QFRGRSIFN. A helical transmembrane segment spans residues 906–926; it reads VTEKVKNTLIFNTFVLCQVFN. At 927–944 the chain is on the cytoplasmic side; it reads EFNARSLEKKNVFKGLHK. A helical membrane pass occupies residues 945–966; the sequence is NRLFIGIIVVTVVLQVVMVEFL. The Lumenal portion of the chain corresponds to 967-976; that stretch reads KRFADTERLN. The chain crosses the membrane as a helical span at residues 977 to 998; sequence LGQWGVCIAIAAASWPIGWLVK. The Cytoplasmic segment spans residues 999-1002; it reads SVPV.

The protein belongs to the cation transport ATPase (P-type) (TC 3.A.3) family. Type IIB subfamily.

It localises to the membrane. It catalyses the reaction Ca(2+)(in) + ATP + H2O = Ca(2+)(out) + ADP + phosphate + H(+). Its activity is regulated as follows. Activated by calmodulin. Functionally, this magnesium-dependent enzyme catalyzes the hydrolysis of ATP coupled with the translocation of calcium from the cytosol out of the cell or into organelles. The sequence is that of Putative calcium-transporting ATPase 13, plasma membrane-type (ACA13) from Arabidopsis thaliana (Mouse-ear cress).